We begin with the raw amino-acid sequence, 212 residues long: High frequency lysogenization protein HflD homolog (212 aa).

Belongs to the HflD family.

It is found in the cytoplasm. The protein resides in the cell inner membrane. This is High frequency lysogenization protein HflD homolog from Pectobacterium carotovorum subsp. carotovorum (strain PC1).